A 265-amino-acid polypeptide reads, in one-letter code: tRNA pseudouridine synthase A (265 aa).

The Nucleophile role is filled by Asp58. Residue Tyr116 participates in substrate binding.

Belongs to the tRNA pseudouridine synthase TruA family. In terms of assembly, homodimer.

The catalysed reaction is uridine(38/39/40) in tRNA = pseudouridine(38/39/40) in tRNA. Functionally, formation of pseudouridine at positions 38, 39 and 40 in the anticodon stem and loop of transfer RNAs. This chain is tRNA pseudouridine synthase A, found in Neisseria gonorrhoeae (strain NCCP11945).